The sequence spans 106 residues: Iron-sulfur cluster assembly protein CyaY (106 aa).

It belongs to the frataxin family.

Functionally, involved in iron-sulfur (Fe-S) cluster assembly. May act as a regulator of Fe-S biogenesis. This chain is Iron-sulfur cluster assembly protein CyaY, found in Salmonella arizonae (strain ATCC BAA-731 / CDC346-86 / RSK2980).